The chain runs to 189 residues: Probable nicotinate-nucleotide adenylyltransferase (189 aa).

The protein belongs to the NadD family.

It catalyses the reaction nicotinate beta-D-ribonucleotide + ATP + H(+) = deamido-NAD(+) + diphosphate. The protein operates within cofactor biosynthesis; NAD(+) biosynthesis; deamido-NAD(+) from nicotinate D-ribonucleotide: step 1/1. Functionally, catalyzes the reversible adenylation of nicotinate mononucleotide (NaMN) to nicotinic acid adenine dinucleotide (NaAD). The polypeptide is Probable nicotinate-nucleotide adenylyltransferase (Exiguobacterium sibiricum (strain DSM 17290 / CCUG 55495 / CIP 109462 / JCM 13490 / 255-15)).